The sequence spans 618 residues: Protein fem-1 homolog C (618 aa).

7 ANK repeats span residues 2 to 31 (DLKT…DREV), 40 to 70 (NGAT…PVEL), 82 to 111 (EGAP…SVNN), 115 to 144 (TNST…DLEV), 148 to 177 (HGHT…DVNR), 181 to 210 (KGNT…SMEK), and 213 to 243 (YGMT…GLAE). 2 TPR repeats span residues 245-279 (ISAL…RHSE) and 337-370 (SYYI…QQSN). ANK repeat units lie at residues 482–524 (NGFS…DVNS) and 528–557 (DDNS…HFDS).

It belongs to the fem-1 family. In terms of assembly, component of a CRL2 E3 ubiquitin-protein ligase complex, also named ECS (Elongin BC-CUL2/5-SOCS-box protein) complex.

The protein operates within protein modification; protein ubiquitination. Functionally, substrate-recognition component of a Cul2-RING (CRL2) E3 ubiquitin-protein ligase complex of the DesCEND (destruction via C-end degrons) pathway, which recognizes a C-degron located at the extreme C terminus of target proteins, leading to their ubiquitination and degradation. The C-degron recognized by the DesCEND pathway is usually a motif of less than ten residues and can be present in full-length proteins, truncated proteins or proteolytically cleaved forms. The CRL2(FEM1C) complex specifically recognizes proteins with an arginine at the C-terminus: recognizes and binds proteins ending with -Lys/Arg-Xaa-Arg and -Lys/Arg-Xaa-Xaa-Arg C-degrons, leading to their ubiquitination and degradation. In Danio rerio (Zebrafish), this protein is Protein fem-1 homolog C.